Reading from the N-terminus, the 97-residue chain is Large ribosomal subunit protein eL21 (97 aa).

Basic residues predominate over residues 1 to 24; it reads MVQKPHSFRRKTRKKLRKHPRRRG. A disordered region spans residues 1–25; sequence MVQKPHSFRRKTRKKLRKHPRRRGL.

This sequence belongs to the eukaryotic ribosomal protein eL21 family.

This chain is Large ribosomal subunit protein eL21 (rpl21e), found in Pyrococcus horikoshii (strain ATCC 700860 / DSM 12428 / JCM 9974 / NBRC 100139 / OT-3).